We begin with the raw amino-acid sequence, 342 residues long: L-threonine 3-dehydrogenase (342 aa).

C38 lines the Zn(2+) pocket. Catalysis depends on charge relay system residues T40 and H43. Positions 63, 64, 93, 96, 99, and 107 each coordinate Zn(2+). Residues I175, D195, R200, L262–I264, and I286–Y287 contribute to the NAD(+) site.

It belongs to the zinc-containing alcohol dehydrogenase family. As to quaternary structure, homotetramer. Zn(2+) serves as cofactor.

It is found in the cytoplasm. It carries out the reaction L-threonine + NAD(+) = (2S)-2-amino-3-oxobutanoate + NADH + H(+). It functions in the pathway amino-acid degradation; L-threonine degradation via oxydo-reductase pathway; glycine from L-threonine: step 1/2. Functionally, catalyzes the NAD(+)-dependent oxidation of L-threonine to 2-amino-3-ketobutyrate. The chain is L-threonine 3-dehydrogenase from Burkholderia cenocepacia (strain ATCC BAA-245 / DSM 16553 / LMG 16656 / NCTC 13227 / J2315 / CF5610) (Burkholderia cepacia (strain J2315)).